The sequence spans 587 residues: MEGESVKLSSQTLIQAGDDEKNQRTITVNPAHMGKAFKVMNELRSKQLLCDVMIVAEDVEIEAHRVVLAACSPYFCAMFTGDMSESKAKKIEIKDVDGQTLSKLIDYIYTAEIEVTEENVQVLLPAASLLQLMDVRQNCCDFLQSQLHPTNCLGIRAFADVHTCTDLLQQANAYAEQHFPEVMLGEEFLSLSLDQVCSLISSDKLTVSSEEKVFEAVISWINYEKETRLEHMAKLMEHVRLPLLPRDYLVQTVEEEALIKNNNTCKDFLIEAMKYHLLPLDQRLLIKNPRTKPRTPVSLPKVMIVVGGQAPKAIRSVECYDFEEDRWDQIAELPSRRCRAGVVFMAGHVYAVGGFNGSLRVRTVDVYDGVKDQWTSIASMQERRSTLGAAVLNDLLYAVGGFDGSTGLASVEAYSYKTNEWFFVAPMNTRRSSVGVGVVEGKLYAVGGYDGASRQCLSTVEQYNPATNEWIYVADMSTRRSGAGVGVLSGQLYATGGHDGPLVRKSVEVYDPGTNTWKQVADMNMCRRNAGVCAVNGLLYVVGGDDGSCNLASVEYYNPVTDKWTLLPTNMSTGRSYAGVAVIHKSL.

Residue Ser10 is modified to Phosphoserine. One can recognise a BTB domain in the interval 50-117 (CDVMIVAEDV…IYTAEIEVTE (68 aa)). In terms of domain architecture, BACK spans 152–254 (CLGIRAFADV…PRDYLVQTVE (103 aa)). Position 295 is a phosphothreonine (Thr295). Kelch repeat units follow at residues 302–347 (VMIV…FMAG), 348–394 (HVYA…VLND), 396–441 (LYAV…VVEG), 442–490 (KLYA…VLSG), 491–537 (QLYA…AVNG), and 539–585 (LYVV…VIHK). Phosphothreonine is present on Thr375. A Phosphoserine modification is found at Ser376. Ser433 carries the phosphoserine; by PKA and PKC modification.

It belongs to the KLHL3 family. As to quaternary structure, homodimer. Component of the BCR(KLHL3) E3 ubiquitin ligase complex, at least composed of CUL3 and KLHL3 and RBX1. Interacts with CLDN8. Phosphorylation at Ser-433 by PKA or PKC decreases the interaction with WNK1 and WNK4, leading to inhibit their degradation by the BCR(KLHL3) complex. Phosphorylated at Ser-433 by PKC in response to angiotensin II signaling, decreasing ability to promote degradation of WNK1 and WNK4, leading to activation of Na-Cl cotransporter SLC12A3/NCC. Phosphorylation at Ser-433 is increased by insulin. Dephosphorylated at Ser-433 by calcineurin PPP3CA, promoting degradation of WNK1 and WNK4. Widely expressed.

The protein localises to the cytoplasm. It is found in the cytosol. The protein resides in the cytoskeleton. It participates in protein modification; protein ubiquitination. Substrate-specific adapter of a BCR (BTB-CUL3-RBX1) E3 ubiquitin ligase complex that acts as a regulator of ion transport in the distal nephron. The BCR(KLHL3) complex acts by mediating ubiquitination and degradation of WNK1 and WNK4, two activators of Na-Cl cotransporter SLC12A3/NCC in distal convoluted tubule cells of kidney, thereby regulating NaCl reabsorption. The BCR(KLHL3) complex also mediates ubiquitination and degradation of WNK3. The BCR(KLHL3) complex also mediates ubiquitination of CLDN8, a tight-junction protein required for paracellular chloride transport in the kidney, leading to its degradation. The chain is Kelch-like protein 3 from Homo sapiens (Human).